We begin with the raw amino-acid sequence, 562 residues long: Potassium-transporting ATPase potassium-binding subunit (562 aa).

The next 12 membrane-spanning stretches (helical) occupy residues 6 to 26 (FLLIASFMVVLFVLSRPLGGF), 62 to 82 (YALAILCFNLLGIVLLFVLLM), 132 to 152 (GLTVQNFLSAATGIAVAFALI), 175 to 195 (LYVLLPIALIIALIFVSQGVL), 253 to 273 (FVQMLAIFLIPCALCFAFGQV), 283 to 303 (LIWAMSLIFIVAVVVVMYAEL), 327 to 347 (FGILATSLYAVVTTAASCGAV), 356 to 376 (ALGGMIPLWLMQIGEVVFGGV), 379 to 399 (GLYGMLLFVLLTVFIAGLMIG), 416 to 436 (MTALAILVTPTIVLLGTALAL), 483 to 503 (LLLAAAMFIGRFGVILPVLAI), and 526 to 546 (LFIGLLIGTVLLVGALTFIPA).

This sequence belongs to the KdpA family. In terms of assembly, the system is composed of three essential subunits: KdpA, KdpB and KdpC.

It localises to the cell inner membrane. Functionally, part of the high-affinity ATP-driven potassium transport (or Kdp) system, which catalyzes the hydrolysis of ATP coupled with the electrogenic transport of potassium into the cytoplasm. This subunit binds the periplasmic potassium ions and delivers the ions to the membrane domain of KdpB through an intramembrane tunnel. This chain is Potassium-transporting ATPase potassium-binding subunit, found in Yersinia pseudotuberculosis serotype IB (strain PB1/+).